A 350-amino-acid polypeptide reads, in one-letter code: Uroporphyrinogen decarboxylase (350 aa).

Substrate contacts are provided by residues Arg-23–Arg-27, Asp-72, Tyr-149, Ser-204, and His-318.

The protein belongs to the uroporphyrinogen decarboxylase family. As to quaternary structure, homodimer.

The protein resides in the cytoplasm. It catalyses the reaction uroporphyrinogen III + 4 H(+) = coproporphyrinogen III + 4 CO2. It participates in porphyrin-containing compound metabolism; protoporphyrin-IX biosynthesis; coproporphyrinogen-III from 5-aminolevulinate: step 4/4. In terms of biological role, catalyzes the decarboxylation of four acetate groups of uroporphyrinogen-III to yield coproporphyrinogen-III. This is Uroporphyrinogen decarboxylase from Carboxydothermus hydrogenoformans (strain ATCC BAA-161 / DSM 6008 / Z-2901).